Here is a 78-residue protein sequence, read N- to C-terminus: MSRVCQVTGKRPMSGNNRSHAMNATKRRFLPNLHSHRFWVEGEKRFVTLRVSAKGMRVIDKKGIETVLAEIRARGEKY.

The interval 1–22 (MSRVCQVTGKRPMSGNNRSHAM) is disordered.

It belongs to the bacterial ribosomal protein bL28 family.

The chain is Large ribosomal subunit protein bL28 from Yersinia pseudotuberculosis serotype O:1b (strain IP 31758).